The chain runs to 325 residues: Cytosolic Fe-S cluster assembly factor Nubp1 homolog (325 aa).

The tract at residues 1–26 is disordered; it reads MSSGADVPSDAPAHCPGTQSDDAGKA. [4Fe-4S] cluster contacts are provided by Cys15, Cys29, Cys32, and Cys38. Residue 68-75 coordinates ATP; that stretch reads GKGGVGKS. Residues Cys243 and Cys246 each coordinate [4Fe-4S] cluster.

This sequence belongs to the Mrp/NBP35 ATP-binding proteins family. NUBP1/NBP35 subfamily. As to quaternary structure, heterotetramer of 2 Nubp1 and 2 Nubp2 chains. Requires [4Fe-4S] cluster as cofactor.

The protein localises to the cytoplasm. Component of the cytosolic iron-sulfur (Fe/S) protein assembly (CIA) machinery. Required for maturation of extramitochondrial Fe-S proteins. The Nubp1-Nubp2 heterotetramer forms a Fe-S scaffold complex, mediating the de novo assembly of an Fe-S cluster and its transfer to target apoproteins. This chain is Cytosolic Fe-S cluster assembly factor Nubp1 homolog, found in Anopheles gambiae (African malaria mosquito).